The chain runs to 242 residues: Ribosomal RNA large subunit methyltransferase E (242 aa).

Residues G64, W66, D84, D100, and D125 each coordinate S-adenosyl-L-methionine. K165 acts as the Proton acceptor in catalysis. The tract at residues 198-242 is disordered; that stretch reads SSETFLLGRGLKKASPNGLDSRSGTAAEPAPLVPIGTNSMPANGD. Residues 233–242 show a composition bias toward polar residues; the sequence is GTNSMPANGD.

It belongs to the class I-like SAM-binding methyltransferase superfamily. RNA methyltransferase RlmE family.

The protein localises to the cytoplasm. It carries out the reaction uridine(2552) in 23S rRNA + S-adenosyl-L-methionine = 2'-O-methyluridine(2552) in 23S rRNA + S-adenosyl-L-homocysteine + H(+). Functionally, specifically methylates the uridine in position 2552 of 23S rRNA at the 2'-O position of the ribose in the fully assembled 50S ribosomal subunit. In Verminephrobacter eiseniae (strain EF01-2), this protein is Ribosomal RNA large subunit methyltransferase E.